Here is a 495-residue protein sequence, read N- to C-terminus: Probable polyamine transporter At1g31830 (495 aa).

The next 11 helical transmembrane spans lie at 49 to 69 (VSML…PFGV), 79 to 99 (LLAL…EALI), 112 to 132 (GYVV…QGWM), 156 to 176 (VPAL…TILL), 186 to 206 (IVGW…AVMG), 230 to 250 (LYLN…TLAG), 267 to 287 (VILV…AIPL), 357 to 377 (TPLL…WLSF), 380 to 400 (IVAA…IAFV), 417 to 437 (IGTT…CAVV), and 442 to 462 (LKVA…HPLL).

The protein belongs to the amino acid-polyamine-organocation (APC) superfamily. Polyamine:cation symporter (PHS) (TC 2.A.3.12) family.

The protein resides in the cell membrane. Probable cell membrane polyamine/proton symporter involved in the polyamine uptake in cells. This chain is Probable polyamine transporter At1g31830, found in Arabidopsis thaliana (Mouse-ear cress).